We begin with the raw amino-acid sequence, 509 residues long: Maturase K (509 aa).

This sequence belongs to the intron maturase 2 family. MatK subfamily.

The protein resides in the plastid. Its subcellular location is the chloroplast. In terms of biological role, usually encoded in the trnK tRNA gene intron. Probably assists in splicing its own and other chloroplast group II introns. The sequence is that of Maturase K from Citrus sinensis (Sweet orange).